The sequence spans 419 residues: L-rhamnose isomerase (419 aa).

His-262, Asp-294, and Asp-296 together coordinate Mn(2+).

This sequence belongs to the rhamnose isomerase family. As to quaternary structure, homotetramer. The cofactor is Mn(2+).

Its subcellular location is the cytoplasm. The catalysed reaction is L-rhamnopyranose = L-rhamnulose. It functions in the pathway carbohydrate degradation; L-rhamnose degradation; glycerone phosphate from L-rhamnose: step 1/3. In terms of biological role, catalyzes the interconversion of L-rhamnose and L-rhamnulose. The protein is L-rhamnose isomerase of Salmonella typhi.